The primary structure comprises 371 residues: Neuropeptide S receptor (371 aa).

Topologically, residues 1-52 (MPANLTEGSFHANQTVPMLDSSPVACTEIVTFTEALVAEEWGSFYSSFKTEQ) are extracellular. N-linked (GlcNAc...) asparagine glycosylation is found at Asn4 and Asn13. The chain crosses the membrane as a helical span at residues 53-73 (LITLWVLFVVTIVGNSVVLFS). At 74–82 (TCRRKRKSR) the chain is on the cytoplasmic side. Residues 83–103 (MTFFVTQLAITDSFTGLINIL) traverse the membrane as a helical segment. At 104-123 (TDIIWRFTGDFMAPDLVCRV) the chain is on the extracellular side. The cysteines at positions 121 and 197 are disulfide-linked. The helical transmembrane segment at 124–144 (VRYLQVVLLYASTYVLVSLSI) threads the bilayer. The Cytoplasmic portion of the chain corresponds to 145-164 (DRYHAIVYPMKFLQGEKQAK). Residues 165-185 (VLIGIAWSLSFLFSIPTLIIF) form a helical membrane-spanning segment. Over 186–212 (GKRTLSNGEVQCWALWPDDSYWTPYMT) the chain is Extracellular. The helical transmembrane segment at 213–233 (IVAFLVYFIPLAIISVIYGLV) threads the bilayer. Topologically, residues 234 to 275 (IRTIWMKSKTHETVISNCSDGKLCCSYNRGLISKAKIKAIKY) are cytoplasmic. Residues 276–296 (SIVIILAFICCWSPYFLFDIL) traverse the membrane as a helical segment. The Extracellular segment spans residues 297 to 312 (DNFNVLPDTKERFYAS). A helical transmembrane segment spans residues 313 to 333 (VIIQNLPALNSAINPLIYCIF). Over 334 to 371 (SSSICSPCKMQRSQDSRMTYRERSERHEMQILSKPEFI) the chain is Cytoplasmic.

It belongs to the G-protein coupled receptor 1 family. Vasopressin/oxytocin receptor subfamily.

The protein resides in the cell membrane. Its function is as follows. G-protein coupled receptor for neuropeptide S (NPS). Promotes mobilization of intracellular Ca(2+) stores. Inhibits cell growth in response to NPS binding. Involved in pathogenesis of asthma and other IgE-mediated diseases. In Mus musculus (Mouse), this protein is Neuropeptide S receptor (Npsr1).